The primary structure comprises 95 residues: CRISPR-associated endoribonuclease Cas2 1 (95 aa).

Asp11 is a Mg(2+) binding site.

Belongs to the CRISPR-associated endoribonuclease Cas2 protein family. As to quaternary structure, homodimer, forms a heterotetramer with a Cas1 homodimer. Mg(2+) is required as a cofactor.

In terms of biological role, CRISPR (clustered regularly interspaced short palindromic repeat), is an adaptive immune system that provides protection against mobile genetic elements (viruses, transposable elements and conjugative plasmids). CRISPR clusters contain sequences complementary to antecedent mobile elements and target invading nucleic acids. CRISPR clusters are transcribed and processed into CRISPR RNA (crRNA). Functions as a ssRNA-specific endoribonuclease. Involved in the integration of spacer DNA into the CRISPR cassette. In Methanospirillum hungatei JF-1 (strain ATCC 27890 / DSM 864 / NBRC 100397 / JF-1), this protein is CRISPR-associated endoribonuclease Cas2 1.